The following is a 495-amino-acid chain: UDP-N-acetylmuramoyl-L-alanyl-D-glutamate--2,6-diaminopimelate ligase (495 aa).

S29 contacts UDP-N-acetyl-alpha-D-muramoyl-L-alanyl-D-glutamate. ATP is bound at residue 111–117; that stretch reads GTNGKTS. UDP-N-acetyl-alpha-D-muramoyl-L-alanyl-D-glutamate-binding positions include 153-154, S180, Q186, and R188; that span reads TT. K220 is subject to N6-carboxylysine. Meso-2,6-diaminopimelate is bound by residues R384, 408–411, G459, and E463; that span reads DNPR. The Meso-diaminopimelate recognition motif signature appears at 408–411; it reads DNPR.

This sequence belongs to the MurCDEF family. MurE subfamily. It depends on Mg(2+) as a cofactor. Carboxylation is probably crucial for Mg(2+) binding and, consequently, for the gamma-phosphate positioning of ATP.

It is found in the cytoplasm. The catalysed reaction is UDP-N-acetyl-alpha-D-muramoyl-L-alanyl-D-glutamate + meso-2,6-diaminopimelate + ATP = UDP-N-acetyl-alpha-D-muramoyl-L-alanyl-gamma-D-glutamyl-meso-2,6-diaminopimelate + ADP + phosphate + H(+). It functions in the pathway cell wall biogenesis; peptidoglycan biosynthesis. Catalyzes the addition of meso-diaminopimelic acid to the nucleotide precursor UDP-N-acetylmuramoyl-L-alanyl-D-glutamate (UMAG) in the biosynthesis of bacterial cell-wall peptidoglycan. The protein is UDP-N-acetylmuramoyl-L-alanyl-D-glutamate--2,6-diaminopimelate ligase of Xanthomonas campestris pv. campestris (strain 8004).